Reading from the N-terminus, the 475-residue chain is Ribulose bisphosphate carboxylase large chain (475 aa).

The propeptide occupies 1–2; the sequence is MS. An N-acetylproline modification is found at P3. Position 14 is an N6,N6,N6-trimethyllysine (K14). Substrate-binding residues include N123 and T173. K175 serves as the catalytic Proton acceptor. Residue K177 coordinates substrate. Positions 201, 203, and 204 each coordinate Mg(2+). N6-carboxylysine is present on K201. The active-site Proton acceptor is the H294. Residues R295, H327, and S379 each coordinate substrate.

This sequence belongs to the RuBisCO large chain family. Type I subfamily. In terms of assembly, heterohexadecamer of 8 large chains and 8 small chains; disulfide-linked. The disulfide link is formed within the large subunit homodimers. It depends on Mg(2+) as a cofactor. The disulfide bond which can form in the large chain dimeric partners within the hexadecamer appears to be associated with oxidative stress and protein turnover.

The protein localises to the plastid. Its subcellular location is the chloroplast. It carries out the reaction 2 (2R)-3-phosphoglycerate + 2 H(+) = D-ribulose 1,5-bisphosphate + CO2 + H2O. It catalyses the reaction D-ribulose 1,5-bisphosphate + O2 = 2-phosphoglycolate + (2R)-3-phosphoglycerate + 2 H(+). Its function is as follows. RuBisCO catalyzes two reactions: the carboxylation of D-ribulose 1,5-bisphosphate, the primary event in carbon dioxide fixation, as well as the oxidative fragmentation of the pentose substrate in the photorespiration process. Both reactions occur simultaneously and in competition at the same active site. The polypeptide is Ribulose bisphosphate carboxylase large chain (Atriplex rosea (Red orache)).